A 271-amino-acid chain; its full sequence is MTESYALFVAFVLGIVEGLTEFLPVSSTGHMIIVGHLLGFDGPKAATFEVVIQMGSILAVVAVFWRRLFGLIGIHFGQKPAQGHATLSLVHIILGMLPAVIIGLAIHSWIKAHLFGPQTVMYALVAGGILLIIAEKFRPAVRSETLDDISYKQALGIGLFQCLALWPGFSRSGATISGGMLMGISRQAAAEFSFILAVPMMVAASGLDLYKSRDLLSMADFPMFAVGFITAFVVAMIAIKTFLALIRRLDFIPFAIYRFVVAFAVYLVFVA.

8 consecutive transmembrane segments (helical) span residues 5–25, 45–65, 86–106, 114–134, 149–169, 189–209, 226–246, and 251–271; these read YALFVAFVLGIVEGLTEFLPV, AATFEVVIQMGSILAVVAVFW, TLSLVHIILGMLPAVIIGLAI, LFGPQTVMYALVAGGILLIIA, ISYKQALGIGLFQCLALWPGF, AAEFSFILAVPMMVAASGLDL, VGFITAFVVAMIAIKTFLALI, and FIPFAIYRFVVAFAVYLVFVA.

The protein belongs to the UppP family.

It localises to the cell inner membrane. The enzyme catalyses di-trans,octa-cis-undecaprenyl diphosphate + H2O = di-trans,octa-cis-undecaprenyl phosphate + phosphate + H(+). Functionally, catalyzes the dephosphorylation of undecaprenyl diphosphate (UPP). Confers resistance to bacitracin. The polypeptide is Undecaprenyl-diphosphatase (Aeromonas hydrophila subsp. hydrophila (strain ATCC 7966 / DSM 30187 / BCRC 13018 / CCUG 14551 / JCM 1027 / KCTC 2358 / NCIMB 9240 / NCTC 8049)).